The primary structure comprises 201 residues: Large ribosomal subunit protein uL4 (201 aa).

Residues Gln-46–Gly-71 are disordered.

It belongs to the universal ribosomal protein uL4 family. In terms of assembly, part of the 50S ribosomal subunit.

In terms of biological role, one of the primary rRNA binding proteins, this protein initially binds near the 5'-end of the 23S rRNA. It is important during the early stages of 50S assembly. It makes multiple contacts with different domains of the 23S rRNA in the assembled 50S subunit and ribosome. Forms part of the polypeptide exit tunnel. The protein is Large ribosomal subunit protein uL4 of Klebsiella pneumoniae (strain 342).